Here is a 107-residue protein sequence, read N- to C-terminus: Nucleoid-associated protein PHZ_c0369 (107 aa).

This sequence belongs to the YbaB/EbfC family. In terms of assembly, homodimer.

Its subcellular location is the cytoplasm. It is found in the nucleoid. Its function is as follows. Binds to DNA and alters its conformation. May be involved in regulation of gene expression, nucleoid organization and DNA protection. In Phenylobacterium zucineum (strain HLK1), this protein is Nucleoid-associated protein PHZ_c0369.